Consider the following 96-residue polypeptide: Putative pterin-4-alpha-carbinolamine dehydratase (96 aa).

It belongs to the pterin-4-alpha-carbinolamine dehydratase family.

It catalyses the reaction (4aS,6R)-4a-hydroxy-L-erythro-5,6,7,8-tetrahydrobiopterin = (6R)-L-erythro-6,7-dihydrobiopterin + H2O. In Prochlorococcus marinus subsp. pastoris (strain CCMP1986 / NIES-2087 / MED4), this protein is Putative pterin-4-alpha-carbinolamine dehydratase.